A 433-amino-acid chain; its full sequence is 23S rRNA (uracil(1939)-C(5))-methyltransferase RlmD (433 aa).

In terms of domain architecture, TRAM spans 10–68; the sequence is RTTTRQIITVSVNDLDSFGQGVARHNGKTLFIPGLLPQENAEVAVTEDKKQYARAKVVR. [4Fe-4S] cluster is bound by residues cysteine 81, cysteine 87, cysteine 90, and cysteine 162. S-adenosyl-L-methionine contacts are provided by glutamine 265, phenylalanine 294, asparagine 299, glutamate 315, asparagine 342, and aspartate 363. Cysteine 389 (nucleophile) is an active-site residue.

Belongs to the class I-like SAM-binding methyltransferase superfamily. RNA M5U methyltransferase family. RlmD subfamily.

It carries out the reaction uridine(1939) in 23S rRNA + S-adenosyl-L-methionine = 5-methyluridine(1939) in 23S rRNA + S-adenosyl-L-homocysteine + H(+). Catalyzes the formation of 5-methyl-uridine at position 1939 (m5U1939) in 23S rRNA. The polypeptide is 23S rRNA (uracil(1939)-C(5))-methyltransferase RlmD (Shigella flexneri).